The chain runs to 141 residues: Arsenate reductase (141 aa).

C12 functions as the Nucleophile; cysteine thioarsenate intermediate in the catalytic mechanism.

The protein belongs to the ArsC family.

The enzyme catalyses [glutaredoxin]-dithiol + arsenate + glutathione + H(+) = glutathionyl-S-S-[glutaredoxin] + arsenite + H2O. Functionally, involved in resistance to arsenate. Catalyzes the reduction of arsenate [As(V)] to arsenite [As(III)]. The polypeptide is Arsenate reductase (Escherichia coli (strain K12)).